A 310-amino-acid chain; its full sequence is Zinc finger CCCH domain-containing protein 14 (310 aa).

The segment at 56–75 is disordered; sequence ESLSPSPPSSSSPPSRVDTT. Residues 84–129 adopt a coiled-coil conformation; it reads KLILEYDELNEHYELCLNRLQSLMTELDSLRHENDSLRFENSDLLK. A compositionally biased stretch (basic and acidic residues) spans 155-167; the sequence is QISDSRSAKRNNQ. The tract at residues 155 to 174 is disordered; sequence QISDSRSAKRNNQERNSLPK. 2 consecutive C3H1-type zinc fingers follow at residues 232 to 260 and 270 to 298; these read MMKT…HGID and RYKT…HSLT.

As to expression, highly expressed in secondary cell wall-forming tissues and the xylem cells of roots. Expressed predominantly in inflorescence stems, flowers and siliques. Highly expressed in the basal portion of stems, where cells are undergoing secondary cell wall thickening.

Functions probably as a transcriptional factor that activates genes involved in secondary cell wall biosynthesis. May play a role in both transcriptional and post-transcriptional regulation. Binds to ssDNA, dsDNA, and ribohomopolymers in vitro. Maybe involved in post-transcriptional regulation of its target genes. Targets RNA of a polygalacturonase, a well-known cell wall modifying gene. Functions redudantly with C3H15 to regulate secondary cell wall formation. C3H14 and C3H15 have overlapping roles in the regulation of secondary cell wall formation and anther development. C3H14 may contribute more to secondary cell wall thickening while C3H15 could be more important in anther development. May regulate at both the transcriptional and post-transcriptional levels the expression of many genes involved in various biological processes, particularly those associated with cell wall metabolism and pollen development. The polypeptide is Zinc finger CCCH domain-containing protein 14 (Arabidopsis thaliana (Mouse-ear cress)).